The following is a 284-amino-acid chain: Fructosamine kinase FrlD (284 aa).

Belongs to the carbohydrate kinase PfkB family.

Functionally, catalyzes the phosphorylation of a range of fructosamines to fructosamine 6-phosphates. This Bacillus subtilis (strain 168) protein is Fructosamine kinase FrlD (frlD).